Consider the following 142-residue polypeptide: Clock-controlled protein 6 (142 aa).

This sequence belongs to the SED1 family.

The chain is Clock-controlled protein 6 (ccg-6) from Neurospora crassa (strain ATCC 24698 / 74-OR23-1A / CBS 708.71 / DSM 1257 / FGSC 987).